The following is a 406-amino-acid chain: Elongation factor Tu-A (406 aa).

The tr-type G domain occupies 10–215 (KPHVNVGTIG…AIDEYIPTPV (206 aa)). The tract at residues 19 to 26 (GHVDHGKT) is G1. 19-26 (GHVDHGKT) serves as a coordination point for GTP. T26 provides a ligand contact to Mg(2+). The tract at residues 61-65 (GITIN) is G2. Positions 82 to 85 (DCPG) are G3. Residues 82–86 (DCPGH) and 137–140 (NKVD) contribute to the GTP site. Residues 137–140 (NKVD) form a G4 region. Residues 175 to 177 (SAL) are G5. T395 is subject to Phosphothreonine.

It belongs to the TRAFAC class translation factor GTPase superfamily. Classic translation factor GTPase family. EF-Tu/EF-1A subfamily. Monomer. Binds to the 70S ribosome, contacts tmRNA during trans-translation. Post-translationally, phosphorylated on a threonine.

Its subcellular location is the cytoplasm. The enzyme catalyses GTP + H2O = GDP + phosphate + H(+). GTP hydrolase that promotes the GTP-dependent binding of aminoacyl-tRNA to the A-site of ribosomes during protein biosynthesis. In terms of biological role, EF-Tu-GDP binds to the acceptor arm of tmRNA by interacting with its acceptor arm, suggesting that GTP hydrolysis by EF-Tu is essential for tmRNA function. Functionally, protects glycyl-tRNA(Gly) from hydrolysis by E.coli D-aminoacyl-tRNA deacylase (dtd). This is Elongation factor Tu-A from Thermus thermophilus (strain ATCC 27634 / DSM 579 / HB8).